We begin with the raw amino-acid sequence, 653 residues long: Probable syringafactin export ATP-binding/permease protein SyfD (653 aa).

In terms of domain architecture, ABC transporter spans 6 to 244; the sequence is LELNGVTRRF…NEKTTERLPT (239 aa). 42–49 lines the ATP pocket; the sequence is GASGSGKS. 5 helical membrane-spanning segments follow: residues 252–272, 278–298, 526–546, 583–603, and 616–636; these read LMAN…ALIS, LLTM…VAIG, LALL…IGVM, MVCL…GYVF, and LGSI…FGFV.

The protein belongs to the ABC transporter superfamily. Macrolide exporter (TC 3.A.1.122) family. Probably part of a tripartite efflux system, which is composed of an inner membrane transporter, a periplasmic membrane fusion protein, and an outer membrane component.

The protein localises to the cell inner membrane. In terms of biological role, probably involved in the export of syringafactins. The protein is Probable syringafactin export ATP-binding/permease protein SyfD of Pseudomonas syringae pv. syringae (strain B728a).